Reading from the N-terminus, the 589-residue chain is MNWQTELNNSLNWILTALFWVVLCFSVTMLALKQTTFGKKFWCIVSPSMDKKTSIKLILMLLVLFIMILLEVRFSVLNSFFYNGLYSSMQELNIEKFWFFAKLNALLVVAQVIHAIADYFFQQVFEIRWLESFNATLVKRWLNKKKYYRLKYERDLPDNIDQRIEQDAREFITSTVQIVRGVINSVLTTIEFTIILWSLSGVLTLFGFNIEKGVVFFIYAFIIFATLMSVWIGRPLIKLNFTKEKLNGDYRYSLIRVRDNAESIAFYNGEPKEQTFLQHQFRQIIHNRWSIVLKMLGLNSFNSGVTRVAKLLPLMLQAPRFFSGQIKLGDMHQTVQAFNRLMTALSFFRLFYEQFTLYQARLNRLYGFITKMDELDKQNVHHPFHCSHRVALKNFGIKDEQGHVLLNNLNINLENGDALLIQGASGTGKTSLLKAIAGIYPFETIGIAEHPCMGSLFLPQRPYMPQGTLREAICYPNINPSHAELEQTMKDCALGKYIHALNVKNDWQAILSPGELQRVAFIRILLTKPDVVFLDETTSALDETTENLLYQTIKERLPEMIILSVGHRSTLQQFHNKQLKLDVCLLCEN.

The next 5 helical transmembrane spans lie at 11–31 (LNWILTALFWVVLCFSVTMLA), 57–77 (LILMLLVLFIMILLEVRFSVL), 97–117 (FWFFAKLNALLVVAQVIHAIA), 190–210 (IEFTIILWSLSGVLTLFGFNI), and 213–233 (GVVFFIYAFIIFATLMSVWIG). The ABC transmembrane type-1 domain maps to 57–357 (LILMLLVLFI…FRLFYEQFTL (301 aa)). The ABC transporter domain maps to 390–587 (VALKNFGIKD…QLKLDVCLLC (198 aa)). Position 423–430 (423–430 (GASGTGKT)) interacts with ATP.

The protein belongs to the ABC transporter superfamily.

It is found in the cell inner membrane. This is an uncharacterized protein from Haemophilus influenzae (strain ATCC 51907 / DSM 11121 / KW20 / Rd).